Reading from the N-terminus, the 81-residue chain is Small ribosomal subunit protein bS16 (81 aa).

Belongs to the bacterial ribosomal protein bS16 family.

The protein is Small ribosomal subunit protein bS16 of Treponema denticola (strain ATCC 35405 / DSM 14222 / CIP 103919 / JCM 8153 / KCTC 15104).